Consider the following 382-residue polypeptide: tRNA (guanine(26)-N(2))-dimethyltransferase (382 aa).

Positions 4 to 370 constitute a Trm1 methyltransferase domain; the sequence is TEVIEGKARL…REFSEILECV (367 aa). S-adenosyl-L-methionine-binding residues include Arg-44, Arg-69, Asp-87, Asp-113, and Ala-114. Cys-244, Cys-247, Cys-261, and Cys-264 together coordinate Zn(2+).

This sequence belongs to the class I-like SAM-binding methyltransferase superfamily. Trm1 family.

It catalyses the reaction guanosine(26) in tRNA + 2 S-adenosyl-L-methionine = N(2)-dimethylguanosine(26) in tRNA + 2 S-adenosyl-L-homocysteine + 2 H(+). In terms of biological role, dimethylates a single guanine residue at position 26 of a number of tRNAs using S-adenosyl-L-methionine as donor of the methyl groups. The chain is tRNA (guanine(26)-N(2))-dimethyltransferase from Metallosphaera sedula (strain ATCC 51363 / DSM 5348 / JCM 9185 / NBRC 15509 / TH2).